Reading from the N-terminus, the 592-residue chain is MKLIASFSIFMLMSIWSFASLGQSNSFDSLFSNEPEFLKVDQAFVFDYVQNGDQLVVTWDIADDYYLYQQQFKAVSKNASLGEPIFPTGKMKEDEFFDEPQEVYYHKVSVTYPILQSQDDSAVKIRYQGCAEAGLCYPPTTQVVYLNAVNASDDLSNTDEASVESSGSVSQQFELADLLTGDQSLIWVLLIFLALGVGLAFTPCVFPMYPILSGIVIGQGKSISTSRAFVLSFVYVQGMALTYSLLGLVVASAGVQFQAALQHPIILGALIVVFALLALVMFGAWEFQLPSSWQEKLNGVSNQQKSGSYLGVLLMGAISGLVASPCTTAPLTGILLYIAQTSDLLLGFSALYALSLGMGIPLILFGITGGKLLPKAGAWMNIIKVTFGFMMLAVALMFVERLVSHMATDILWSLLGLVTFSYFYVMNQASSVTFGKGVRALVIFIGLFASAMYGYQTIFGQTSSVAGHTEQSHPRFEVVKNLDDFEQKLAAANAQGKTVMVDLYADWCVACKEFEKYTFPDTQVVDALSNTVWMQIDLTDNTATNIAFQEHFSILGLPTILFFDLQGKEISGSRVTGFMQASAFAAHAKNIL.

The first 19 residues, M1 to A19, serve as a signal peptide directing secretion. 2 cysteine pairs are disulfide-bonded: C130–C136 and C204–C326. Helical transmembrane passes span I186–F206, F229–V249, I265–W285, I318–I338, L345–F365, W379–V399, M406–M426, and A440–G460. The Thioredoxin domain maps to I443–L592. C508 and C511 form a disulfide bridge.

Belongs to the thioredoxin family. DsbD subfamily.

Its subcellular location is the cell inner membrane. It carries out the reaction [protein]-dithiol + NAD(+) = [protein]-disulfide + NADH + H(+). It catalyses the reaction [protein]-dithiol + NADP(+) = [protein]-disulfide + NADPH + H(+). Functionally, required to facilitate the formation of correct disulfide bonds in some periplasmic proteins and for the assembly of the periplasmic c-type cytochromes. Acts by transferring electrons from cytoplasmic thioredoxin to the periplasm. This transfer involves a cascade of disulfide bond formation and reduction steps. The sequence is that of Thiol:disulfide interchange protein DsbD from Pseudoalteromonas atlantica (strain T6c / ATCC BAA-1087).